The sequence spans 300 residues: 1D-myo-inositol 2-acetamido-2-deoxy-alpha-D-glucopyranoside deacetylase (300 aa).

Residues histidine 13, aspartate 16, and histidine 147 each contribute to the Zn(2+) site.

This sequence belongs to the MshB deacetylase family. It depends on Zn(2+) as a cofactor.

The catalysed reaction is 1D-myo-inositol 2-acetamido-2-deoxy-alpha-D-glucopyranoside + H2O = 1D-myo-inositol 2-amino-2-deoxy-alpha-D-glucopyranoside + acetate. Its function is as follows. Catalyzes the deacetylation of 1D-myo-inositol 2-acetamido-2-deoxy-alpha-D-glucopyranoside (GlcNAc-Ins) in the mycothiol biosynthesis pathway. This chain is 1D-myo-inositol 2-acetamido-2-deoxy-alpha-D-glucopyranoside deacetylase, found in Mycobacterium avium (strain 104).